A 524-amino-acid polypeptide reads, in one-letter code: Alkaline phosphatase, tissue-nonspecific isozyme (524 aa).

Residues 1 to 17 form the signal peptide; sequence MISPFLVLAIGTCLTNS. Asp-60 is a Mg(2+) binding site. Residues Asp-60 and Ser-110 each coordinate Zn(2+). Ser-110 (phosphoserine intermediate) is an active-site residue. Phosphoserine is present on Ser-110. The cysteines at positions 139 and 201 are disulfide-linked. Asn-140 carries N-linked (GlcNAc...) asparagine glycosylation. Thr-173 contributes to the Mg(2+) binding site. Asn-230 is a glycosylation site (N-linked (GlcNAc...) asparagine). Residue Glu-235 coordinates Ca(2+). Asn-271 is a glycosylation site (N-linked (GlcNAc...) asparagine). Phe-290 and Glu-291 together coordinate Ca(2+). N-linked (GlcNAc...) asparagine glycosylation occurs at Asn-303. A Ca(2+)-binding site is contributed by Asp-306. Residue Glu-332 participates in Mg(2+) binding. The Zn(2+) site is built by Asp-337, His-341, Asp-378, and His-379. N-linked (GlcNAc...) asparagine glycosylation is present at Asn-430. His-454 contacts Zn(2+). Residues Cys-489 and Cys-497 are joined by a disulfide bond. Gly-501 carries GPI-anchor amidated glycine lipidation. Residues 502–524 constitute a propeptide, removed in mature form; it reads SGSAPSPGALLLPLAVLSLRTLF.

This sequence belongs to the alkaline phosphatase family. As to quaternary structure, homodimer. Mg(2+) is required as a cofactor. The cofactor is Zn(2+). Requires Ca(2+) as cofactor. In terms of processing, N-glycosylated. Widely expressed. Expressed in DRG neurons and spinal cord neurons.

The protein localises to the cell membrane. It localises to the extracellular vesicle membrane. The protein resides in the mitochondrion membrane. It is found in the mitochondrion intermembrane space. The enzyme catalyses a phosphate monoester + H2O = an alcohol + phosphate. It carries out the reaction diphosphate + H2O = 2 phosphate + H(+). It catalyses the reaction pyridoxal 5'-phosphate + H2O = pyridoxal + phosphate. The catalysed reaction is phosphoethanolamine + H2O = ethanolamine + phosphate. The enzyme catalyses N-phosphocreatine + H2O = creatine + phosphate. It carries out the reaction ATP + H2O = ADP + phosphate + H(+). It catalyses the reaction ADP + H2O = AMP + phosphate + H(+). The catalysed reaction is AMP + H2O = adenosine + phosphate. With respect to regulation, phosphatase activity is specifically inhibited by 5-((5-chloro-2-methoxyphenyl)sulfonamido)nicotinamide (SBI-425). Alkaline phosphatase that metabolizes various phosphate compounds and plays a key role in skeletal mineralization and adaptive thermogenesis. Has broad substrate specificity and can hydrolyze a considerable variety of compounds: however, only a few substrates, such as diphosphate (inorganic pyrophosphate; PPi), pyridoxal 5'-phosphate (PLP) and N-phosphocreatine are natural substrates. Plays an essential role in skeletal and dental mineralization via its ability to hydrolyze extracellular diphosphate, a potent mineralization inhibitor, to phosphate: it thereby promotes hydroxyapatite crystal formation and increases inorganic phosphate concentration. Acts in a non-redundant manner with PHOSPHO1 in skeletal mineralization: while PHOSPHO1 mediates the initiation of hydroxyapatite crystallization in the matrix vesicles (MVs), ALPL/TNAP catalyzes the spread of hydroxyapatite crystallization in the extracellular matrix. Also promotes dephosphorylation of osteopontin (SSP1), an inhibitor of hydroxyapatite crystallization in its phosphorylated state; it is however unclear whether ALPL/TNAP mediates SSP1 dephosphorylation via a direct or indirect manner. Catalyzes dephosphorylation of PLP to pyridoxal (PL), the transportable form of vitamin B6, in order to provide a sufficient amount of PLP in the brain, an essential cofactor for enzymes catalyzing the synthesis of diverse neurotransmitters. Additionally, also able to mediate ATP degradation in a stepwise manner to adenosine, thereby regulating the availability of ligands for purinergic receptors. Also capable of dephosphorylating microbial products, such as lipopolysaccharides (LPS) as well as other phosphorylated small-molecules, such as poly-inosine:cytosine (poly I:C). Acts as a key regulator of adaptive thermogenesis as part of the futile creatine cycle: localizes to the mitochondria of thermogenic fat cells and acts by mediating hydrolysis of N-phosphocreatine to initiate a futile cycle of creatine dephosphorylation and phosphorylation. During the futile creatine cycle, creatine and N-phosphocreatine are in a futile cycle, which dissipates the high energy charge of N-phosphocreatine as heat without performing any mechanical or chemical work. This Mus musculus (Mouse) protein is Alkaline phosphatase, tissue-nonspecific isozyme.